A 467-amino-acid chain; its full sequence is Dimethylamine methyltransferase MtbB1 (467 aa).

A non-standard amino acid (pyrrolysine) is located at residue Pyl356.

It belongs to the dimethylamine methyltransferase family.

The enzyme catalyses Co(I)-[dimethylamine-specific corrinoid protein] + dimethylamine + H(+) = methyl-Co(III)-[dimethylamine-specific corrinoid protein] + methylamine. The protein operates within one-carbon metabolism; methanogenesis from dimethylamine. Catalyzes the transfer of a methyl group from dimethylamine to the corrinoid cofactor of MtbC. The polypeptide is Dimethylamine methyltransferase MtbB1 (mtbB1) (Methanosarcina acetivorans (strain ATCC 35395 / DSM 2834 / JCM 12185 / C2A)).